A 212-amino-acid polypeptide reads, in one-letter code: uncharacterized protein (212 aa).

This is an uncharacterized protein from Archaeoglobus fulgidus (strain ATCC 49558 / DSM 4304 / JCM 9628 / NBRC 100126 / VC-16).